A 308-amino-acid polypeptide reads, in one-letter code: GTP cyclohydrolase MptA (308 aa).

Residues 282–308 are disordered; the sequence is NDESIHQHNAHAEREVTLGQLRDELDA.

It belongs to the GTP cyclohydrolase IV family. Homodimer. Fe(2+) is required as a cofactor.

It carries out the reaction GTP + H2O = 7,8-dihydroneopterin 2',3'-cyclic phosphate + formate + diphosphate + H(+). It functions in the pathway cofactor biosynthesis; 5,6,7,8-tetrahydromethanopterin biosynthesis. Functionally, converts GTP to 7,8-dihydro-D-neopterin 2',3'-cyclic phosphate, the first intermediate in the biosynthesis of coenzyme methanopterin. Involved in archaeosine (G(+)) and folate biosynthesis. The sequence is that of GTP cyclohydrolase MptA from Haloferax volcanii (strain ATCC 29605 / DSM 3757 / JCM 8879 / NBRC 14742 / NCIMB 2012 / VKM B-1768 / DS2) (Halobacterium volcanii).